A 99-amino-acid chain; its full sequence is Nucleoid-associated protein EbfC (99 aa).

Belongs to the YbaB/EbfC family. Homodimer. Can form tetramers and octamers in solution.

The protein resides in the cytoplasm. It localises to the nucleoid. In terms of biological role, binds to DNA and alters its conformation. May be involved in global regulation of gene expression. Binds specifically and non-specifically to DNA, preferentially to the 4 bp broken palindrome 5'-GTnAC-3'. Affects expression of a wide variety of genes, encoding both structural and metabolic proteins. The polypeptide is Nucleoid-associated protein EbfC (Borreliella burgdorferi (strain ATCC 35210 / DSM 4680 / CIP 102532 / B31) (Borrelia burgdorferi)).